A 748-amino-acid polypeptide reads, in one-letter code: Polyribonucleotide nucleotidyltransferase (748 aa).

Residues aspartate 487 and aspartate 493 each coordinate Mg(2+). The region spanning 554–613 (PSTTTIKIDKDKIRDIIGPGGKVIKEICETSGAKIDISDDGTVSVYASDRDKLKVALDKI) is the KH domain. In terms of domain architecture, S1 motif spans 623-691 (GEIFNGTVVK…NKGKAKLTIK (69 aa)). Positions 695-733 (KDKFSNNTKPKTSVNNTKDNSEPEQRHDSSKKRAWNEDN) are disordered. The segment covering 699–712 (SNNTKPKTSVNNTK) has biased composition (polar residues). The segment covering 713-722 (DNSEPEQRHD) has biased composition (basic and acidic residues).

The protein belongs to the polyribonucleotide nucleotidyltransferase family. The cofactor is Mg(2+).

It is found in the cytoplasm. It catalyses the reaction RNA(n+1) + phosphate = RNA(n) + a ribonucleoside 5'-diphosphate. In terms of biological role, involved in mRNA degradation. Catalyzes the phosphorolysis of single-stranded polyribonucleotides processively in the 3'- to 5'-direction. The sequence is that of Polyribonucleotide nucleotidyltransferase from Rickettsia rickettsii (strain Iowa).